The primary structure comprises 690 residues: UvrABC system protein C (690 aa).

Residues 15–94 enclose the GIY-YIG domain; that stretch reads TDPGVYTFRD…IKRFNPRFNV (80 aa). A UVR domain is found at 207 to 242; it reads EPVLRRVRKEMEQASENLDFERAASLRDQLQAMQKS.

This sequence belongs to the UvrC family. Interacts with UvrB in an incision complex.

It is found in the cytoplasm. Its function is as follows. The UvrABC repair system catalyzes the recognition and processing of DNA lesions. UvrC both incises the 5' and 3' sides of the lesion. The N-terminal half is responsible for the 3' incision and the C-terminal half is responsible for the 5' incision. The protein is UvrABC system protein C of Corynebacterium jeikeium (strain K411).